We begin with the raw amino-acid sequence, 635 residues long: Threonine--tRNA ligase (635 aa).

The region spanning 1–61 (MVSIRLPDGS…DRDASLAIVT (61 aa)) is the TGS domain. Residues 242-533 (DHRKLGKQLD…LIEHHAGAMP (292 aa)) form a catalytic region. C333, H384, and H510 together coordinate Zn(2+).

The protein belongs to the class-II aminoacyl-tRNA synthetase family. Homodimer. The cofactor is Zn(2+).

It is found in the cytoplasm. The catalysed reaction is tRNA(Thr) + L-threonine + ATP = L-threonyl-tRNA(Thr) + AMP + diphosphate + H(+). Functionally, catalyzes the attachment of threonine to tRNA(Thr) in a two-step reaction: L-threonine is first activated by ATP to form Thr-AMP and then transferred to the acceptor end of tRNA(Thr). Also edits incorrectly charged L-seryl-tRNA(Thr). The polypeptide is Threonine--tRNA ligase (Burkholderia orbicola (strain MC0-3)).